The primary structure comprises 129 residues: Glycine cleavage system H protein (129 aa).

The 83-residue stretch at 24–106 folds into the Lipoyl-binding domain; it reads TYTVGITEHA…YAGGWIFKIK (83 aa). At Lys-65 the chain carries N6-lipoyllysine.

The protein belongs to the GcvH family. In terms of assembly, the glycine cleavage system is composed of four proteins: P, T, L and H. Requires (R)-lipoate as cofactor.

In terms of biological role, the glycine cleavage system catalyzes the degradation of glycine. The H protein shuttles the methylamine group of glycine from the P protein to the T protein. The protein is Glycine cleavage system H protein of Citrobacter koseri (strain ATCC BAA-895 / CDC 4225-83 / SGSC4696).